The primary structure comprises 311 residues: tRNA dimethylallyltransferase (311 aa).

ATP is bound at residue 12–19 (GPTASGKT). 14-19 (TASGKT) serves as a coordination point for substrate. Interaction with substrate tRNA regions lie at residues 37–40 (DSAM) and 161–165 (QRIQR).

Belongs to the IPP transferase family. In terms of assembly, monomer. The cofactor is Mg(2+).

It carries out the reaction adenosine(37) in tRNA + dimethylallyl diphosphate = N(6)-dimethylallyladenosine(37) in tRNA + diphosphate. Catalyzes the transfer of a dimethylallyl group onto the adenine at position 37 in tRNAs that read codons beginning with uridine, leading to the formation of N6-(dimethylallyl)adenosine (i(6)A). The sequence is that of tRNA dimethylallyltransferase from Coxiella burnetii (strain RSA 331 / Henzerling II).